The primary structure comprises 367 residues: MMETLSQRLSVCQDKILEHYETDSTCLSDHIQYWKLIRLECAVFYKAREMGIKTLNHQVVPTQAISKAKAMQAIELQLMLETLNTTEYSTETWTLQETSIELYTTVPQGCFKKHGVTVEVQFDGDKQNTMHYTNWTHIYILEDSICTVVKGLVNYKGIYYVHQGVETYYVTFREEAKKYGKKNIWEVHVGGQVIVCPESVFSSTELSTAEIATQLHAYNTTETHTKACSVGTTETQKTNHKRLRGGTELPYNPTKRVRLSAVDSVDRGVYSTSDCTNKDRCGSCSTTTPIVHLKGDANTLKCLRYRLGKYKALYQDASSTWRWTCTNDKKQIAIVTLTYTTEYQRDKFLTTVKIPNTVTVSKGYMSI.

The tract at residues 1–201 is transactivation domain; it reads MMETLSQRLS…QVIVCPESVF (201 aa). Positions 287–367 are DNA-binding domain; the sequence is TTPIVHLKGD…VTVSKGYMSI (81 aa). Lys294 is covalently cross-linked (Glycyl lysine isopeptide (Lys-Gly) (interchain with G-Cter in SUMO)).

This sequence belongs to the papillomaviridae E2 protein family. In terms of assembly, binds DNA as homodimer. Interacts with protein E1; this interaction greatly increases E1 DNA-binding activity. Interacts with protein L1; this interaction enhances E2-dependent replication and transcription activation. Interacts with protein L2; this interaction inhibits E2 transcriptional activity but not DNA replication function E2. Interacts with protein E7; this interaction inhibits E7 oncogenic activity. Interacts with host TAF1; this interaction modulates E2-dependent transcriptional regulation. Interacts with host BRD4; this interaction mediates E2 transcriptional activation function. Additionally, the interaction with host BRD4 on mitotic chromosomes mediates tethering of the viral genome. Interacts with host TOPBP1; this interaction is required for optimal viral DNA replication. In terms of processing, phosphorylated. Sumoylation plays a regulatory role in E2 transcriptional activity.

The protein localises to the host nucleus. Plays a role in the initiation of viral DNA replication. A dimer of E2 interacts with a dimer of E1 in order to improve specificity of E1 DNA binding activity. Once the complex recognizes and binds DNA at specific sites, the E2 dimer is removed from DNA. E2 also regulates viral transcription through binding to the E2RE response element (5'-ACCNNNNNNGGT-3') present in multiple copies in the regulatory regions of the viral genome. Activates or represses transcription depending on E2RE's position with regards to proximal promoter elements including the TATA-box. Repression occurs by sterically hindering the assembly of the transcription initiation complex. In Homo sapiens (Human), this protein is Regulatory protein E2.